A 354-amino-acid polypeptide reads, in one-letter code: DNA polymerase IV (354 aa).

The UmuC domain maps to Ile7–Gly188. Asp11 and Asp106 together coordinate Mg(2+). Glu107 is a catalytic residue.

This sequence belongs to the DNA polymerase type-Y family. As to quaternary structure, monomer. Mg(2+) serves as cofactor.

The protein localises to the cytoplasm. It catalyses the reaction DNA(n) + a 2'-deoxyribonucleoside 5'-triphosphate = DNA(n+1) + diphosphate. Its function is as follows. Poorly processive, error-prone DNA polymerase involved in untargeted mutagenesis. Copies undamaged DNA at stalled replication forks, which arise in vivo from mismatched or misaligned primer ends. These misaligned primers can be extended by PolIV. Exhibits no 3'-5' exonuclease (proofreading) activity. May be involved in translesional synthesis, in conjunction with the beta clamp from PolIII. The protein is DNA polymerase IV of Shigella boydii serotype 18 (strain CDC 3083-94 / BS512).